Consider the following 221-residue polypeptide: Small ribosomal subunit protein uS5 (221 aa).

Residues 46 to 109 enclose the S5 DRBM domain; it reads LKDEVIDIKR…INAKLNIMEI (64 aa).

It belongs to the universal ribosomal protein uS5 family. Part of the 30S ribosomal subunit. Contacts protein S4.

Its function is as follows. With S4 and S12 plays an important role in translational accuracy. The protein is Small ribosomal subunit protein uS5 of Thermoplasma acidophilum (strain ATCC 25905 / DSM 1728 / JCM 9062 / NBRC 15155 / AMRC-C165).